Consider the following 70-residue polypeptide: Small ribosomal subunit protein bS21 (70 aa).

This sequence belongs to the bacterial ribosomal protein bS21 family.

The polypeptide is Small ribosomal subunit protein bS21 (Nitrosomonas eutropha (strain DSM 101675 / C91 / Nm57)).